Here is a 166-residue protein sequence, read N- to C-terminus: Protein SprT (166 aa).

The SprT-like domain occupies 20–164 (EHLANANRKL…CVRCGDLLVA (145 aa)). Residue H78 participates in Zn(2+) binding. E79 is a catalytic residue. H82 is a Zn(2+) binding site.

This sequence belongs to the SprT family. Zn(2+) is required as a cofactor.

Its subcellular location is the cytoplasm. The polypeptide is Protein SprT (Klebsiella pneumoniae subsp. pneumoniae (strain ATCC 700721 / MGH 78578)).